We begin with the raw amino-acid sequence, 265 residues long: Ribosomal RNA small subunit methyltransferase A (265 aa).

His13, Leu15, Gly40, Glu61, Asp85, and Asn103 together coordinate S-adenosyl-L-methionine.

This sequence belongs to the class I-like SAM-binding methyltransferase superfamily. rRNA adenine N(6)-methyltransferase family. RsmA subfamily.

The protein resides in the cytoplasm. The catalysed reaction is adenosine(1518)/adenosine(1519) in 16S rRNA + 4 S-adenosyl-L-methionine = N(6)-dimethyladenosine(1518)/N(6)-dimethyladenosine(1519) in 16S rRNA + 4 S-adenosyl-L-homocysteine + 4 H(+). In terms of biological role, specifically dimethylates two adjacent adenosines (A1518 and A1519) in the loop of a conserved hairpin near the 3'-end of 16S rRNA in the 30S particle. May play a critical role in biogenesis of 30S subunits. This chain is Ribosomal RNA small subunit methyltransferase A, found in Bordetella pertussis (strain Tohama I / ATCC BAA-589 / NCTC 13251).